We begin with the raw amino-acid sequence, 302 residues long: Protoheme IX farnesyltransferase 2 (302 aa).

9 helical membrane passes run 14–34 (IIFG…QGSV), 36–56 (WWLL…GCAI), 85–105 (AALA…WFCT), 108–128 (LATG…SLYM), 133–153 (VYGT…GYCA), 163–183 (AILL…IAIF), 209–229 (IVLY…GGYA), 230–250 (GYGY…MALS), and 264–284 (QVFF…AVDG).

The protein belongs to the UbiA prenyltransferase family. Protoheme IX farnesyltransferase subfamily.

The protein resides in the cell inner membrane. It carries out the reaction heme b + (2E,6E)-farnesyl diphosphate + H2O = Fe(II)-heme o + diphosphate. The protein operates within porphyrin-containing compound metabolism; heme O biosynthesis; heme O from protoheme: step 1/1. Converts heme B (protoheme IX) to heme O by substitution of the vinyl group on carbon 2 of heme B porphyrin ring with a hydroxyethyl farnesyl side group. The polypeptide is Protoheme IX farnesyltransferase 2 (Chromobacterium violaceum (strain ATCC 12472 / DSM 30191 / JCM 1249 / CCUG 213 / NBRC 12614 / NCIMB 9131 / NCTC 9757 / MK)).